We begin with the raw amino-acid sequence, 379 residues long: Homoserine O-succinyltransferase (379 aa).

An AB hydrolase-1 domain is found at 48-357 (NAVLICHALS…SAHGHDAFLM (310 aa)). S154 (nucleophile) is an active-site residue. R224 serves as a coordination point for substrate. Active-site residues include D319 and H352. Residue D353 participates in substrate binding.

Belongs to the AB hydrolase superfamily. MetX family. Homodimer.

It is found in the cytoplasm. It catalyses the reaction L-homoserine + succinyl-CoA = O-succinyl-L-homoserine + CoA. It participates in amino-acid biosynthesis; L-methionine biosynthesis via de novo pathway; O-succinyl-L-homoserine from L-homoserine: step 1/1. Transfers a succinyl group from succinyl-CoA to L-homoserine, forming succinyl-L-homoserine. The protein is Homoserine O-succinyltransferase of Neisseria gonorrhoeae (strain ATCC 700825 / FA 1090).